Reading from the N-terminus, the 105-residue chain is Large ribosomal subunit protein eL36 (105 aa).

This sequence belongs to the eukaryotic ribosomal protein eL36 family. In terms of assembly, component of the large ribosomal subunit.

It is found in the cytoplasm. It localises to the cytosol. Functionally, component of the large ribosomal subunit. The ribosome is a large ribonucleoprotein complex responsible for the synthesis of proteins in the cell. The polypeptide is Large ribosomal subunit protein eL36 (rpl36) (Xenopus laevis (African clawed frog)).